Consider the following 587-residue polypeptide: MYRTNTCGELRLSHLQQTVTLCGWVQRVRRMGGMTFVDLRDRYGTTQLVFNRDSAPAELCDRAEDLGREWVIRATGTVMERSSKNPNIPTGDIEIAVGEMDVLNRSEVPPFTIEDETDGGDDLRMKYRYLDLRRHCVRSNMELRHRMALEVRKYLDGEGFLEVETPMLIKSTPEGARDFVVPSRMNPGQFYALPQSPQTFKQLLMVSGFDRYFQIVKCFRDEDLRADRQPEFTQIDCEMSFVEQEDVLSTFEGMAKHLFRTIRHVEISEAFPRMTWHDAMKYYGSDKPDTRFDMRFVELMDVLKGHGFSVFDSAAYIGGICAKGAGSYTRKQLDALTDFVKRPQVGAKGMVYARVESDGSVKSSVDKFYTQETLQELRRTMEAEPGDLILILSGDDLMKTRKQLCELRLEVGSQLGLRDKNKFSCLWVVDFPLFEWDEETKRFYAMHHPFTSPKPEDIPLLDTDPGAVRANAYDMVINGVEVGGGSIRIHDSALQQKMFELLGFTPEKAQEQFGFLMNAFKYGAPPHGGLAYGLDRWVSLFAGLDSIRDCIAFPKNNAGRDVMIDAPSVIDEAQLQELFLELIPNEN.

E174 provides a ligand contact to L-aspartate. The tract at residues 198–201 (QTFK) is aspartate. R220 is a binding site for L-aspartate. ATP contacts are provided by residues 220–222 (RDE) and Q229. H447 contributes to the L-aspartate binding site. E481 contacts ATP. R488 contributes to the L-aspartate binding site. An ATP-binding site is contributed by 533–536 (GLDR).

Belongs to the class-II aminoacyl-tRNA synthetase family. Type 1 subfamily. Homodimer.

It localises to the cytoplasm. The enzyme catalyses tRNA(Asp) + L-aspartate + ATP = L-aspartyl-tRNA(Asp) + AMP + diphosphate. Functionally, catalyzes the attachment of L-aspartate to tRNA(Asp) in a two-step reaction: L-aspartate is first activated by ATP to form Asp-AMP and then transferred to the acceptor end of tRNA(Asp). In Porphyromonas gingivalis (strain ATCC BAA-308 / W83), this protein is Aspartate--tRNA ligase.